We begin with the raw amino-acid sequence, 96 residues long: Protein RnfH (96 aa).

The protein belongs to the UPF0125 (RnfH) family.

This is Protein RnfH from Cronobacter sakazakii (strain ATCC BAA-894) (Enterobacter sakazakii).